The chain runs to 286 residues: Diaminopimelate epimerase (286 aa).

Substrate-binding residues include Asn-13 and Asn-66. The Proton donor role is filled by Cys-75. Substrate contacts are provided by residues 76–77 (GN), Asn-165, Asn-198, and 216–217 (ER). The active-site Proton acceptor is the Cys-225. Residue 226–227 (GT) coordinates substrate.

This sequence belongs to the diaminopimelate epimerase family. In terms of assembly, homodimer.

The protein resides in the cytoplasm. The enzyme catalyses (2S,6S)-2,6-diaminopimelate = meso-2,6-diaminopimelate. It functions in the pathway amino-acid biosynthesis; L-lysine biosynthesis via DAP pathway; DL-2,6-diaminopimelate from LL-2,6-diaminopimelate: step 1/1. Catalyzes the stereoinversion of LL-2,6-diaminopimelate (L,L-DAP) to meso-diaminopimelate (meso-DAP), a precursor of L-lysine and an essential component of the bacterial peptidoglycan. The sequence is that of Diaminopimelate epimerase from Oceanobacillus iheyensis (strain DSM 14371 / CIP 107618 / JCM 11309 / KCTC 3954 / HTE831).